The chain runs to 287 residues: Festuclavine synthase II (287 aa).

It belongs to the fgaFS/easG family.

It carries out the reaction festuclavine + NAD(+) = 6,8-dimethyl-6,7-didehydroergoline + NADH + H(+). It participates in alkaloid biosynthesis; ergot alkaloid biosynthesis. Its function is as follows. Festuclavine synthase; part of the gene cluster that mediates the biosynthesis of isofumigaclavines, fungal ergot alkaloids. The tryptophan dimethylallyltransferase ifgA catalyzes the first step of ergot alkaloid biosynthesis by condensing dimethylallyl diphosphate (DMAP) and tryptophan to form 4-dimethylallyl-L-tryptophan. The second step is catalyzed by the methyltransferase ifgB that methylates 4-dimethylallyl-L-tryptophan in the presence of S-adenosyl-L-methionine, resulting in the formation of N-methyl-dimethylallyl-L-tryptophan. The catalase ifgD and the FAD-dependent oxidoreductase ifgC then transform N-methyl-dimethylallyl-L-tryptophan to chanoclavine-I which is further oxidized by ifgE in the presence of NAD(+), resulting in the formation of chanoclavine-I aldehyde. The chanoclavine-I aldehyde reductases ifgG and/or fgaOx3 reduce chanoclavine-I aldehyde to dihydrochanoclavine-I aldehyde that spontaneously dehydrates to form 6,8-dimethyl-6,7-didehydroergoline. The festuclavine dehydrogenases ifgF1 and/or ifgF2 then catalyze the reduction of 6,8-dimethyl-6,7-didehydroergoline to form festuclavine. Hydrolysis of festuclavine by a yet undetermined cytochrome P450 monooxygenase (called ifgH) then leads to the formation of isofumigaclavine B which is in turn acetylated by ifgI to isofumigaclavine A. Penicillium roqueforti has interestingly at least two sets of genes for the consumption of chanoclavine-I aldehyde on three different loci, the OYEs ifgG/fgaOx3 and the festuclavine synthase homologs ifgF1/ifgF2. The reason for the duplication of these genes is unclear, probably to ensure the conversion of chanoclavine-I aldehyde by differential gene expression under various environmental conditions. This is Festuclavine synthase II from Penicillium roqueforti (strain FM164).